Here is a 579-residue protein sequence, read N- to C-terminus: Protein PLASTID MOVEMENT IMPAIRED 15 (579 aa).

Coiled-coil stretches lie at residues 90 to 161 (EVLK…NEEH), 188 to 216 (KVLD…IEIE), 383 to 419 (QKTK…KLES), and 481 to 501 (LMKT…EERE).

Belongs to the WEB family.

Its function is as follows. Required for the chloroplast avoidance response under high intensity blue light. This avoidance response consists in the relocation of chloroplasts on the anticlinal side of exposed cells. This is Protein PLASTID MOVEMENT IMPAIRED 15 (PMI15) from Arabidopsis thaliana (Mouse-ear cress).